The chain runs to 186 residues: Adenine phosphoribosyltransferase (186 aa).

Position 132 to 136 (132 to 136 (ATGGS)) interacts with AMP.

It belongs to the purine/pyrimidine phosphoribosyltransferase family. As to quaternary structure, homodimer. The cofactor is Mg(2+).

It is found in the cytoplasm. It localises to the nucleus. It catalyses the reaction AMP + diphosphate = 5-phospho-alpha-D-ribose 1-diphosphate + adenine. Its pathway is purine metabolism; AMP biosynthesis via salvage pathway; AMP from adenine: step 1/1. Functionally, catalyzes a salvage reaction resulting in the formation of AMP, that is energically less costly than de novo synthesis. This chain is Adenine phosphoribosyltransferase (APT1), found in Debaryomyces hansenii (strain ATCC 36239 / CBS 767 / BCRC 21394 / JCM 1990 / NBRC 0083 / IGC 2968) (Yeast).